The following is a 72-amino-acid chain: EAGEECDCGAPENPCCDAATCKLRPGAQCAEGLCCDQCRFKGAGKICRRARGDNPDDRCTGQSADCPRNRFY.

The region spanning 1–72 is the Disintegrin domain; that stretch reads EAGEECDCGA…SADCPRNRFY (72 aa). 6 disulfides stabilise this stretch: Cys6–Cys21, Cys8–Cys16, Cys15–Cys38, Cys29–Cys35, Cys34–Cys59, and Cys47–Cys66. A Cell attachment site motif is present at residues 51–53; the sequence is RGD. A disordered region spans residues 52–72; that stretch reads GDNPDDRCTGQSADCPRNRFY.

The protein belongs to the venom metalloproteinase (M12B) family. P-II subfamily. P-IIa sub-subfamily. Monomer. In terms of tissue distribution, expressed by the venom gland.

Its subcellular location is the secreted. In terms of biological role, inhibits fibrinogen interaction with platelets. Acts by binding to the glycoprotein IIb-IIIa receptor (ITGA2B/ITGB3) on the platelet surface and inhibits aggregation induced by ADP, thrombin, platelet-activating factor and collagen. Also inhibits T24 and SK-Mel-28 cell adhesion to fibronectin with IC(50) of 4.4 uM and 33 nM, respectively. This Bothrops atrox (Barba amarilla) protein is Disintegrin batroxostatin.